The primary structure comprises 210 residues: Proline-rich protein 20G (210 aa).

Residues 1–11 are compositionally biased toward basic residues; the sequence is MEEPRHSKRPR. Residues 1–82 are disordered; the sequence is MEEPRHSKRP…GGSWRAGRGR (82 aa). The segment covering 69–82 has biased composition (gly residues); that stretch reads GQRGGGSWRAGRGR.

This sequence belongs to the PRR20 family.

In Homo sapiens (Human), this protein is Proline-rich protein 20G.